A 709-amino-acid chain; its full sequence is ATP-dependent zinc metalloprotease YME1 homolog (709 aa).

Residues F152 to P182 are disordered. The span at T153 to S165 shows a compositional bias: low complexity. Residues I217–A239 traverse the membrane as a helical segment. Residue G307–T314 participates in ATP binding. H530 is a binding site for Zn(2+). E531 is a catalytic residue. Zn(2+) contacts are provided by H534 and D608.

It in the N-terminal section; belongs to the AAA ATPase family. The protein in the C-terminal section; belongs to the peptidase M41 family. Requires Zn(2+) as cofactor.

The protein localises to the mitochondrion membrane. Putative ATP-dependent protease. The polypeptide is ATP-dependent zinc metalloprotease YME1 homolog (Schizosaccharomyces pombe (strain 972 / ATCC 24843) (Fission yeast)).